Consider the following 434-residue polypeptide: UDP-N-acetylglucosamine 1-carboxyvinyltransferase 1 (434 aa).

Lys22–Asn23 contributes to the phosphoenolpyruvate binding site. Arg93 provides a ligand contact to UDP-N-acetyl-alpha-D-glucosamine. Cys117 serves as the catalytic Proton donor. Cys117 carries the post-translational modification 2-(S-cysteinyl)pyruvic acid O-phosphothioketal. UDP-N-acetyl-alpha-D-glucosamine-binding positions include Arg122–Gln126, Asp306, and Val328.

The protein belongs to the EPSP synthase family. MurA subfamily.

It is found in the cytoplasm. The enzyme catalyses phosphoenolpyruvate + UDP-N-acetyl-alpha-D-glucosamine = UDP-N-acetyl-3-O-(1-carboxyvinyl)-alpha-D-glucosamine + phosphate. It functions in the pathway cell wall biogenesis; peptidoglycan biosynthesis. In terms of biological role, cell wall formation. Adds enolpyruvyl to UDP-N-acetylglucosamine. In Bacillus anthracis, this protein is UDP-N-acetylglucosamine 1-carboxyvinyltransferase 1.